A 509-amino-acid chain; its full sequence is Histidine--tRNA ligase, cytoplasmic (509 aa).

Ala2 carries the N-acetylalanine modification. In terms of domain architecture, WHEP-TRS spans 3-59 (DRAALEELVRLQGAHVRGLKEQKASAEQIEEEVTKLLKLKAQLGQDEGKQKFVLKTP). A Phosphoserine modification is found at Ser66. L-histidine is bound by residues 130–132 (DLT), Arg157, Gln173, Asp177, Arg326, and 330–331 (YY). Ser356 carries the post-translational modification Phosphoserine.

It belongs to the class-II aminoacyl-tRNA synthetase family. As to quaternary structure, homodimer.

It localises to the cytoplasm. The catalysed reaction is tRNA(His) + L-histidine + ATP = L-histidyl-tRNA(His) + AMP + diphosphate + H(+). Its function is as follows. Catalyzes the ATP-dependent ligation of histidine to the 3'-end of its cognate tRNA, via the formation of an aminoacyl-adenylate intermediate (His-AMP). Plays a role in axon guidance. In Mus musculus (Mouse), this protein is Histidine--tRNA ligase, cytoplasmic (Hars1).